An 86-amino-acid chain; its full sequence is Ferredoxin-like protein YgcO (86 aa).

Residues 45–74 form the 4Fe-4S ferredoxin-type domain; it reads GNLRIDYRSCLECGTCRLLCDESTLQQWRY.

This sequence belongs to the bacterial-type ferredoxin family. FixX subfamily.

In terms of biological role, could be a 3Fe-4S cluster-containing protein. Probably participates in a redox process with YgcN, YgcQ and YgcR. In Escherichia coli (strain K12), this protein is Ferredoxin-like protein YgcO (ygcO).